We begin with the raw amino-acid sequence, 72 residues long: Rubredoxin in uptake hydrogenase operon (72 aa).

Positions 19 to 70 (DAVLECKICWHRYDPAVGDEVWQILAGTPFAALPAHWRCPQCDGDREQFMVV) constitute a Rubredoxin-like domain. 4 residues coordinate Fe cation: Cys-24, Cys-27, Cys-57, and Cys-60.

The protein belongs to the rubredoxin family. It depends on Fe(3+) as a cofactor.

Functionally, could be an electron transport intermediate in hydrogen oxidation. In Azotobacter chroococcum mcd 1, this protein is Rubredoxin in uptake hydrogenase operon (hupR).